The sequence spans 305 residues: Methionyl-tRNA formyltransferase (305 aa).

Position 111 to 114 (111 to 114 (SLLP)) interacts with (6S)-5,6,7,8-tetrahydrofolate.

The protein belongs to the Fmt family.

The catalysed reaction is L-methionyl-tRNA(fMet) + (6R)-10-formyltetrahydrofolate = N-formyl-L-methionyl-tRNA(fMet) + (6S)-5,6,7,8-tetrahydrofolate + H(+). Attaches a formyl group to the free amino group of methionyl-tRNA(fMet). The formyl group appears to play a dual role in the initiator identity of N-formylmethionyl-tRNA by promoting its recognition by IF2 and preventing the misappropriation of this tRNA by the elongation apparatus. The polypeptide is Methionyl-tRNA formyltransferase (Helicobacter pylori (strain HPAG1)).